A 410-amino-acid polypeptide reads, in one-letter code: Monoglucosyldiacylglycerol epimerase (410 aa).

Positions 1 to 14 (MAMAWLMGLGLALA) are cleaved as a signal peptide. Transmembrane regions (helical) follow at residues 71 to 91 (ALVMLAFGIWPPLLTWMWQGF) and 96 to 116 (LILAASAGMVYTLGFLLSAIA). The active-site Proton acceptor is Tyr-320. Residues 380 to 400 (IIVTINPITFIAFPVKEFFVS) traverse the membrane as a helical segment.

Belongs to the short-chain dehydrogenases/reductases (SDR) family.

The protein resides in the membrane. It catalyses the reaction a 1,2-diacyl-3-O-(beta-D-glucopyranosyl)-sn-glycerol = a 1,2-diacyl-3-O-(beta-D-galactosyl)-sn-glycerol. Functionally, involved in the biosynthesis of galactolipids found in the photosynthetic membranes. Catalyzes the isomerization of monoglucosyldiacylglycerol (GlcDG) to yield monogalactosyldiacylglycerol (MGDG). The chain is Monoglucosyldiacylglycerol epimerase from Synechocystis sp. (strain ATCC 27184 / PCC 6803 / Kazusa).